Consider the following 134-residue polypeptide: Acyl carrier protein, chloroplastic (134 aa).

A chloroplast-targeting transit peptide spans 1–51; that stretch reads MATTFSASVSMQATSLATTTRISFQKPVLVSNHGRTNLSFNLSRTRLSISC. The region spanning 55–130 is the Carrier domain; sequence QETVEKVSEI…QAAELIEELM (76 aa). The residue at position 90 (Ser-90) is an O-(pantetheine 4'-phosphoryl)serine.

Belongs to the acyl carrier protein (ACP) family. 4'-phosphopantetheine is transferred from CoA to a specific serine of apo-ACP by acpS. This modification is essential for activity because fatty acids are bound in thioester linkage to the sulfhydryl of the prosthetic group. As to expression, seed.

The protein localises to the plastid. The protein resides in the chloroplast. Its pathway is lipid metabolism; fatty acid biosynthesis. Carrier of the growing fatty acid chain in fatty acid biosynthesis. The protein is Acyl carrier protein, chloroplastic (ACL1.C1) of Brassica napus (Rape).